We begin with the raw amino-acid sequence, 1129 residues long: Ubiquitin carboxyl-terminal hydrolase 15 (1129 aa).

A disordered region spans residues 1–26 (MVLSNVDAEEVNMDSSMELEESSQEP). The span at 7–23 (DAEEVNMDSSMELEESS) shows a compositional bias: acidic residues. An MATH domain is found at 51–204 (HASYSWVVKN…NDEICISVTV (154 aa)). Residues 230–545 (VGLKNQGATC…NAYMLVYFRK (316 aa)) enclose the USP domain. The Nucleophile role is filled by cysteine 239. Histidine 481 serves as the catalytic Proton acceptor.

The protein belongs to the peptidase C19 family.

The protein resides in the nucleus. It carries out the reaction Thiol-dependent hydrolysis of ester, thioester, amide, peptide and isopeptide bonds formed by the C-terminal Gly of ubiquitin (a 76-residue protein attached to proteins as an intracellular targeting signal).. Hydrolase that deubiquitinates target proteins. Cleaves the UBL propeptide in sde2. Involved in regulating the steady-state levels of proteins including prp4. The chain is Ubiquitin carboxyl-terminal hydrolase 15 from Schizosaccharomyces pombe (strain 972 / ATCC 24843) (Fission yeast).